Here is a 67-residue protein sequence, read N- to C-terminus: Protein AaeX (67 aa).

The next 2 membrane-spanning stretches (helical) occupy residues 3 to 23 and 43 to 63; these read LFPV…ELLL and FVWH…YLIS.

This sequence belongs to the AaeX family.

The protein localises to the cell membrane. This is Protein AaeX from Escherichia coli O1:K1 / APEC.